The sequence spans 700 residues: Putative glutamine-dependent NAD(+) synthetase (700 aa).

In terms of domain architecture, CN hydrolase spans 5-275 (VTIASCQLNQ…VEVISATVDV (271 aa)). Glu45 (proton acceptor; for glutaminase activity) is an active-site residue. Lys114 acts as the For glutaminase activity in catalysis. The Nucleophile; for glutaminase activity role is filled by Cys175. Residues 327–700 (IPLPEEEITF…ASKFEQHQRK (374 aa)) are ligase. 357 to 364 (PLSGGLDS) contacts ATP. The active site involves Ser359.

This sequence in the C-terminal section; belongs to the NAD synthetase family.

It catalyses the reaction deamido-NAD(+) + L-glutamine + ATP + H2O = L-glutamate + AMP + diphosphate + NAD(+) + H(+). The protein operates within cofactor biosynthesis; NAD(+) biosynthesis; NAD(+) from deamido-NAD(+) (L-Gln route): step 1/1. This Schizosaccharomyces pombe (strain 972 / ATCC 24843) (Fission yeast) protein is Putative glutamine-dependent NAD(+) synthetase.